A 328-amino-acid polypeptide reads, in one-letter code: Glycerophosphodiester phosphodiesterase GDPD4 (328 aa).

The helical transmembrane segment at Thr-35–Leu-55 threads the bilayer. A GP-PDE domain is found at Pro-73–Met-312.

Belongs to the glycerophosphoryl diester phosphodiesterase family. In terms of tissue distribution, expressed in rosette and cauline leaves.

It is found in the membrane. The enzyme catalyses a sn-glycero-3-phosphodiester + H2O = an alcohol + sn-glycerol 3-phosphate + H(+). This chain is Glycerophosphodiester phosphodiesterase GDPD4, found in Arabidopsis thaliana (Mouse-ear cress).